A 217-amino-acid chain; its full sequence is Growth factor receptor-bound protein 2 (217 aa).

Position 1 is an N-acetylmethionine (methionine 1). The SH3 1 domain maps to 1-58; sequence MEAIAKYDFKATADDELSFKRGDILKVLNEECDQNWYKAELNGKDGFIPKNYIEMKPH. Lysine 6, lysine 50, and lysine 109 each carry N6-acetyllysine. The SH2 domain occupies 60-152; that stretch reads WFFGKIPRAK…NQQIFLRDIE (93 aa). Residue lysine 109 forms a Glycyl lysine isopeptide (Lys-Gly) (interchain with G-Cter in ubiquitin) linkage. Positions 156–215 constitute an SH3 2 domain; sequence QQPTYVQALFDFDPQEDGELGFRRGDFIHVMDNSDPNWWKGACHGQTGMFPRNYVTPVNR. A Phosphotyrosine modification is found at tyrosine 209. Position 211 is a phosphothreonine (threonine 211).

It belongs to the GRB2/sem-5/DRK family. As to quaternary structure, homodimer. Associates (via SH2 domain) with activated EGF and PDGF receptors (tyrosine phosphorylated). Interacts with PDGFRA (tyrosine phosphorylated); the interaction may be indirect. Also associates to other cellular Tyr-phosphorylated proteins such as SIT1, IRS1, IRS2, IRS4, SHC and LNK; probably via the concerted action of both its SH2 and SH3 domains. It also seems to interact with RAS in the signaling pathway leading to DNA synthesis. Interacts with SOS1. Forms a complex with MUC1 and SOS1, through interaction of the SH3 domains with SOS1 and the SH2 domain with phosphorylated MUC1. Interacts with phosphorylated MET. Interacts with phosphorylated TOM1L1. Interacts with the phosphorylated C-terminus of SH2B2. Interacts with phosphorylated SIT1, LAX1, LAT, LAT2 and LIME1 upon TCR and/or BCR activation. Interacts with NISCH, PTPNS1 and REPS2. Interacts with syntrophin SNTA1. Interacts (via SH3 domains) with REPS1. Interacts (via SH3 domains) with PIK3C2B. Interacts with CBL and CBLB. Interacts with AJUBA and CLNK. Interacts (via SH2 domain) with TEK/TIE2 (tyrosine phosphorylated). Interacts with SHB, INPP5D/SHIP1, SKAP1 and SKAP2. Interacts with PTPN11. Interacts with PRNP. Interacts with RALGPS1. Interacts with HCST. Interacts with KDR. Interacts with FLT1 (tyrosine-phosphorylated). Interacts with GAPT and PTPRE. Interacts (via SH2 domain) with KIF26A. Interacts (via SH3 2) with GAB2. Interacts with ADAM15. Interacts with THEMIS2. Interacts (via SH2 domain) with AXL (phosphorylated). Interacts (via SH2 domain) with KIT (phosphorylated). Interacts with PTPRJ and BCR. Interacts with PTPN23. Interacts with FLT4 (tyrosine phosphorylated). Interacts with EPHB1 and SHC1; activates the MAPK/ERK cascade to regulate cell migration. Part of a complex including TNK2, GRB2, LTK and one receptor tyrosine kinase (RTK) such as AXL and PDGFRL, in which GRB2 promotes RTK recruitment by TNK2. Interacts (via SH2 domain) with CSF1R (tyrosine phosphorylated). Interacts with ERBB4. Interacts with NTRK1 (phosphorylated upon ligand-binding). Interacts with PTK2/FAK1 (tyrosine phosphorylated). Interacts with PTK2B/PYK2 (tyrosine phosphorylated). Interacts (via SH3 domains) with GAREM1 isoform 1 (via proline-rich domain and tyrosine phosphorylated); the interaction occurs upon EGF stimulation. Interacts with DAB2. Interacts with TESPA1. Interacts with PLCG1, LAT and THEMIS upon TCR activation in thymocytes; the association is weaker in the absence of TESPA1. Interacts with CD28. Interacts with RAB13; may recruit RAB13 to the leading edge of migrating endothelial cells where it can activate RHOA. Interacts with ASAP3 (phosphorylated form). Interacts (via SH2 domain) with PTPRH (phosphorylated form). Interacts with PTPRO (phosphorylated form). Interacts with PTPRB (phosphorylated form). Interacts (via SH3 domain 2) with PRR14 (via proline-rich region). Interacts with FCRL6 (tyrosine phosphorylated form). Interacts with RHEX (via tyrosine-phosphorylated form). Interacts with DENND2B. Interacts with SPRY2. Interacts with LRRC8A. Interacts with PEAK1. Interacts with CD28. Interacts with FCRL1. Interacts with PCNA. Interacts with CD19. Interacts with BECN1. Interacts with RAD51; the interaction inhibits RAD51 ATPase to stabilize RAD51-DNA complex at stalled replication forks. Interacts with MRE11; this interaction recruits MRE11 to the DNA damage sites. Interacts with RIPK1 ans SQSTM1; these interactions play a critical role in regulating programmed necrosis. Interacts with AGO2; this interaction is important for the formation of a ternary complex containing GRB2, AGO2 and DICER1. Interacts with TIGIT; this interaction inhibits PI3K and MAPK signaling cascades. Interacts with CD226; this interaction leads to activation of VAV1, PI3K and PLCG1. Interacts (via SH2-domain) with SCIMP; this interaction is dependent on phosphorylation of SCIMP 'Tyr-69'. In terms of assembly, interacts with SOS1; this interaction competes with GRB2 to bind SOS1 via its N-terminal SH3 domain. As to quaternary structure, (Microbial infection) Interacts (via SH3 domain) with hepatitis E virus/HEV ORF3 protein. (Microbial infection) Interacts with hepatitis C virus/HCV protein NS5A via its SH3 domains. In terms of assembly, (Microbial infection) Interacts with herpes simplex virus 1 protein UL46. As to quaternary structure, (Microbial infection) Interacts with B19 parvovirus protein 11K. In terms of processing, phosphorylation of Tyr-209 in the C-terminal SH3 domain reduces its binding to SOS1. Post-translationally, ubiquitinated by RNF173, leading to proteasomal degradation and inhibition of the RAF/MEK/ERK pathway. In the nucleus, polyubiquitinated by RBBP6 at Lys-109 at DNA damage sites.

The protein resides in the nucleus. It localises to the cytoplasm. It is found in the endosome. Its subcellular location is the golgi apparatus. Non-enzymatic adapter protein that plays a pivotal role in precisely regulated signaling cascades from cell surface receptors to cellular responses, including signaling transduction and gene expression. Thus, participates in many biological processes including regulation of innate and adaptive immunity, autophagy, DNA repair or necroptosis. Controls signaling complexes at the T-cell antigen receptor to facilitate the activation, differentiation, and function of T-cells. Mechanistically, engagement of the TCR leads to phosphorylation of the adapter protein LAT, which serves as docking site for GRB2. In turn, GRB2 establishes a a connection with SOS1 that acts as a guanine nucleotide exchange factor and serves as a critical regulator of KRAS/RAF1 leading to MAPKs translocation to the nucleus and activation. Functions also a role in B-cell activation by amplifying Ca(2+) mobilization and activation of the ERK MAP kinase pathway upon recruitment to the phosphorylated B-cell antigen receptor (BCR). Plays a role in switching between autophagy and programmed necrosis upstream of EGFR by interacting with components of necrosomes including RIPK1 and with autophagy regulators SQSTM1 and BECN1. Regulates miRNA biogenesis by forming a functional ternary complex with AGO2 and DICER1. Functions in the replication stress response by protecting DNA at stalled replication forks from MRE11-mediated degradation. Mechanistically, inhibits RAD51 ATPase activity to stabilize RAD51 on stalled replication forks. Additionally, directly recruits and later releases MRE11 at DNA damage sites during the homology-directed repair (HDR) process. Functionally, does not bind to phosphorylated epidermal growth factor receptor (EGFR) but inhibits EGF-induced transactivation of a RAS-responsive element. Acts as a dominant negative protein over GRB2 and by suppressing proliferative signals, may trigger active programmed cell death. Mechanistically, inhibits RAS-ERK signaling and downstream cell proliferation by competing with GRB2 for SOS1 binding and thus by regulating SOS1 membrane recruitment. The polypeptide is Growth factor receptor-bound protein 2 (GRB2) (Homo sapiens (Human)).